A 227-amino-acid polypeptide reads, in one-letter code: Prolactin-4A1 (227 aa).

Positions 1 to 31 are cleaved as a signal peptide; it reads MHLSLTPQWSSWTVLLLLVSNLLLWENTASA. Intrachain disulfides connect Cys-87–Cys-203 and Cys-220–Cys-227. Asn-175 carries N-linked (GlcNAc...) asparagine glycosylation.

It belongs to the somatotropin/prolactin family. As to expression, expressed specifically in placenta. Expressed in both trophoblast giant cells and spongiotrophoblast cells.

It localises to the secreted. The sequence is that of Prolactin-4A1 (Prl4a1) from Mus musculus (Mouse).